We begin with the raw amino-acid sequence, 220 residues long: Ribosomal RNA small subunit methyltransferase J (220 aa).

S-adenosyl-L-methionine is bound by residues 55-56, 71-72, and Asp-123; these read RD and ER.

The protein belongs to the methyltransferase superfamily. RsmJ family.

Its subcellular location is the cytoplasm. The enzyme catalyses guanosine(1516) in 16S rRNA + S-adenosyl-L-methionine = N(2)-methylguanosine(1516) in 16S rRNA + S-adenosyl-L-homocysteine + H(+). In terms of biological role, specifically methylates the guanosine in position 1516 of 16S rRNA. This Rhodopseudomonas palustris (strain BisB5) protein is Ribosomal RNA small subunit methyltransferase J.